Here is a 223-residue protein sequence, read N- to C-terminus: DNA mismatch repair protein MutH (223 aa).

This sequence belongs to the MutH family.

It is found in the cytoplasm. In terms of biological role, sequence-specific endonuclease that cleaves unmethylated GATC sequences. It is involved in DNA mismatch repair. The protein is DNA mismatch repair protein MutH of Shewanella sp. (strain ANA-3).